Here is a 429-residue protein sequence, read N- to C-terminus: Phosphoribosylamine--glycine ligase (429 aa).

Residues 108 to 315 (KDFLARHRIP…LVLLVEAALA (208 aa)) form the ATP-grasp domain. ATP is bound at residue 134–195 (LHEQGAPIVI…EEFLDGEEAS (62 aa)). 2 residues coordinate Mg(2+): glutamate 285 and asparagine 287.

It belongs to the GARS family. Mg(2+) serves as cofactor. The cofactor is Mn(2+).

The catalysed reaction is 5-phospho-beta-D-ribosylamine + glycine + ATP = N(1)-(5-phospho-beta-D-ribosyl)glycinamide + ADP + phosphate + H(+). It participates in purine metabolism; IMP biosynthesis via de novo pathway; N(1)-(5-phospho-D-ribosyl)glycinamide from 5-phospho-alpha-D-ribose 1-diphosphate: step 2/2. The polypeptide is Phosphoribosylamine--glycine ligase (Pseudomonas aeruginosa (strain ATCC 15692 / DSM 22644 / CIP 104116 / JCM 14847 / LMG 12228 / 1C / PRS 101 / PAO1)).